The following is a 117-amino-acid chain: NADH-ubiquinone oxidoreductase chain 3 (117 aa).

3 helical membrane passes run 4–24 (ILIY…LGLI), 57–77 (FFLL…LLPL), and 88–108 (WPLT…FHEW).

Belongs to the complex I subunit 3 family.

The protein resides in the mitochondrion membrane. It catalyses the reaction a ubiquinone + NADH + 5 H(+)(in) = a ubiquinol + NAD(+) + 4 H(+)(out). Functionally, core subunit of the mitochondrial membrane respiratory chain NADH dehydrogenase (Complex I) that is believed to belong to the minimal assembly required for catalysis. Complex I functions in the transfer of electrons from NADH to the respiratory chain. The immediate electron acceptor for the enzyme is believed to be ubiquinone. This chain is NADH-ubiquinone oxidoreductase chain 3 (ND3), found in Heterololigo bleekeri (Spear squid).